Reading from the N-terminus, the 120-residue chain is Holo-[acyl-carrier-protein] synthase (120 aa).

Positions 8 and 58 each coordinate Mg(2+).

The protein belongs to the P-Pant transferase superfamily. AcpS family. Mg(2+) serves as cofactor.

It is found in the cytoplasm. The enzyme catalyses apo-[ACP] + CoA = holo-[ACP] + adenosine 3',5'-bisphosphate + H(+). In terms of biological role, transfers the 4'-phosphopantetheine moiety from coenzyme A to a Ser of acyl-carrier-protein. The protein is Holo-[acyl-carrier-protein] synthase of Streptococcus pneumoniae (strain Hungary19A-6).